The sequence spans 100 residues: Urease subunit gamma (100 aa).

This sequence belongs to the urease gamma subunit family. In terms of assembly, heterotrimer of UreA (gamma), UreB (beta) and UreC (alpha) subunits. Three heterotrimers associate to form the active enzyme.

The protein resides in the cytoplasm. It catalyses the reaction urea + 2 H2O + H(+) = hydrogencarbonate + 2 NH4(+). It functions in the pathway nitrogen metabolism; urea degradation; CO(2) and NH(3) from urea (urease route): step 1/1. The protein is Urease subunit gamma of Cupriavidus metallidurans (strain ATCC 43123 / DSM 2839 / NBRC 102507 / CH34) (Ralstonia metallidurans).